The primary structure comprises 344 residues: GTPase Obg (344 aa).

In terms of domain architecture, Obg spans 1–159; the sequence is MKFLDLAKVY…RTIWLRLKLI (159 aa). In terms of domain architecture, OBG-type G spans 160 to 327; sequence ADVGLLGLPN…VLRALRARID (168 aa). Residues 166 to 173, 191 to 195, 212 to 215, 279 to 282, and 308 to 310 each bind GTP; these read GLPNAGKS, FTTLH, DIPG, NKID, and SGA. Ser-173 and Thr-193 together coordinate Mg(2+).

Belongs to the TRAFAC class OBG-HflX-like GTPase superfamily. OBG GTPase family. Monomer. Mg(2+) is required as a cofactor.

Its subcellular location is the cytoplasm. In terms of biological role, an essential GTPase which binds GTP, GDP and possibly (p)ppGpp with moderate affinity, with high nucleotide exchange rates and a fairly low GTP hydrolysis rate. Plays a role in control of the cell cycle, stress response, ribosome biogenesis and in those bacteria that undergo differentiation, in morphogenesis control. The sequence is that of GTPase Obg from Ruegeria pomeroyi (strain ATCC 700808 / DSM 15171 / DSS-3) (Silicibacter pomeroyi).